The primary structure comprises 61 residues: Large ribosomal subunit protein eL37 (61 aa).

4 residues coordinate Zn(2+): C19, C22, C34, and C37. The C4-type zinc finger occupies 19–37 (CRRCGRNSFNARKGYCAAC).

It belongs to the eukaryotic ribosomal protein eL37 family. It depends on Zn(2+) as a cofactor.

Binds to the 23S rRNA. The chain is Large ribosomal subunit protein eL37 from Sulfolobus acidocaldarius (strain ATCC 33909 / DSM 639 / JCM 8929 / NBRC 15157 / NCIMB 11770).